The chain runs to 167 residues: Secreted LysM effector Blys6 (167 aa).

The signal sequence occupies residues 1–16; that stretch reads MKGLCVAACTLVLAAA. One can recognise a LysM domain in the interval 109-162; that stretch reads KWYRIRRGDDCGPVASEFGISADQLIEWNPWLSADVDGTHYPCMNIWPTDNLCV.

It belongs to the secreted LysM effector family.

Functionally, might have a role in sequestration of chitin oligosaccharides (breakdown products of fungal cell walls that are released during invasion and act as triggers of host immunity) to dampen host defense. This Beauveria bassiana (strain ARSEF 2860) (White muscardine disease fungus) protein is Secreted LysM effector Blys6.